The sequence spans 227 residues: UPF0758 protein Spro_4842 (227 aa).

An MPN domain is found at 105–227 (AMLNPRMTQH…CVSFAERGWL (123 aa)). Residues His176, His178, and Asp189 each coordinate Zn(2+). A JAMM motif motif is present at residues 176-189 (HNHPSGKAEPSHAD).

This sequence belongs to the UPF0758 family. YicR subfamily.

The polypeptide is UPF0758 protein Spro_4842 (Serratia proteamaculans (strain 568)).